The primary structure comprises 633 residues: Beta-myrcene synthase TPS15CT (633 aa).

Residues 1-55 constitute a chloroplast transit peptide; sequence MHCMAVHQFSPSIVSSLPTISTYNNNHFCRFFTPKTSISPISKTKSKSSTCYPIQ. The (2E)-geranyl diphosphate site is built by arginine 344, aspartate 381, aspartate 385, arginine 525, and aspartate 528. Residues aspartate 381 and aspartate 385 each coordinate Mg(2+). The short motif at 381–385 is the DDXXD motif element; that stretch reads DDIYD. Positions 528, 532, and 536 each coordinate Mg(2+).

The protein belongs to the terpene synthase family. Tpsb subfamily. Requires Mg(2+) as cofactor. It depends on Mn(2+) as a cofactor.

Its subcellular location is the plastid. The protein resides in the chloroplast. The catalysed reaction is (2E)-geranyl diphosphate = beta-myrcene + diphosphate. It participates in secondary metabolite biosynthesis; terpenoid biosynthesis. Its function is as follows. Involved in monoterpene (C10) olefins biosynthesis, constituants of cannabinoids and terpenoids-rich resins. Catalyzes strictly the conversion of (2E)-geranyl diphosphate to beta-myrcene. The sequence is that of Beta-myrcene synthase TPS15CT from Cannabis sativa (Hemp).